We begin with the raw amino-acid sequence, 1188 residues long: Zinc finger SWIM domain-containing protein 5 (1188 aa).

Over residues 1 to 10 the composition is skewed to basic and acidic residues; the sequence is MAEGGEREEL. Disordered stretches follow at residues 1–46 and 123–171; these read MAEG…GAGG and AGAA…TGTA. 2 stretches are compositionally biased toward low complexity: residues 126-136 and 146-155; these read AAGAAGASPVE and AAPAGSAPGA. A compositionally biased stretch (gly residues) spans 156–171; it reads AGAGSSPGLGAGTGTA. An SWIM-type zinc finger spans residues 222–259; the sequence is YKVAISFDRCKITSVSCGCGNKDIFYCAHVVALSLYRI.

This is Zinc finger SWIM domain-containing protein 5 (Zswim5) from Mus musculus (Mouse).